The chain runs to 451 residues: Spermidine sinapoyl-CoA acyltransferase (451 aa).

Tyr47, His169, Ser294, Asp316, and Leu378 together coordinate spermidine. His169 functions as the Proton acceptor in the catalytic mechanism. Asp391 acts as the Proton acceptor in catalysis.

The protein belongs to the plant acyltransferase family. Monomer. In terms of tissue distribution, predominantly expressed in siliques, especially in seeds around the embryo, and, at low levels, in flowers. Barely detectable in stems, leaves, and roots.

The enzyme catalyses 2 (E)-sinapoyl-CoA + spermidine = N(1),N(8)-bis[(E)-sinapoyl]-spermidine + 2 CoA + 2 H(+). It functions in the pathway amine and polyamine metabolism; spermidine metabolism. Its function is as follows. Spermidine sinapoyl-CoA acyltransferase that mediates the accumulation of disinapoyl spermidine conjugates in seeds. Catalyzes the two conjugating steps required for the biosynthesis of N1,N8-disipanoyl-spermidine. Can also use putrescine as an acyl acceptor to convert it into monosinapoyl-putrescine. The sequence is that of Spermidine sinapoyl-CoA acyltransferase from Arabidopsis thaliana (Mouse-ear cress).